The chain runs to 221 residues: Thiopurine S-methyltransferase (221 aa).

Residues Trp-12, Leu-47, Glu-68, and Arg-125 each coordinate S-adenosyl-L-methionine.

The protein belongs to the class I-like SAM-binding methyltransferase superfamily. TPMT family.

It localises to the cytoplasm. It carries out the reaction S-adenosyl-L-methionine + a thiopurine = S-adenosyl-L-homocysteine + a thiopurine S-methylether.. The chain is Thiopurine S-methyltransferase from Legionella pneumophila (strain Corby).